We begin with the raw amino-acid sequence, 136 residues long: Succinate dehydrogenase assembly factor 3, mitochondrial (136 aa).

A mitochondrion-targeting transit peptide spans 1–24 (MRASMVRRMAAAASSSASSSLRPA).

It belongs to the complex I LYR family. SDHAF3 subfamily. In terms of assembly, interacts with the iron-sulfur protein subunit within the SDH catalytic dimer.

It localises to the mitochondrion matrix. In terms of biological role, plays an essential role in the assembly of succinate dehydrogenase (SDH), an enzyme complex (also referred to as respiratory complex II) that is a component of both the tricarboxylic acid (TCA) cycle and the mitochondrial electron transport chain, and which couples the oxidation of succinate to fumarate with the reduction of ubiquinone (coenzyme Q) to ubiquinol. Promotes maturation of the iron-sulfur protein subunit of the SDH catalytic dimer, protecting it from the deleterious effects of oxidants. May act together with SDHAF1. This is Succinate dehydrogenase assembly factor 3, mitochondrial from Pyricularia oryzae (strain 70-15 / ATCC MYA-4617 / FGSC 8958) (Rice blast fungus).